The chain runs to 332 residues: SLAM family member 6 (332 aa).

Residues 1–21 (MLWLFQSLLFVFCFGPGNVVS) form the signal peptide. Topologically, residues 22-226 (QSSLTPLMVN…VKIQYTDTKM (205 aa)) are extracellular. Residues 35–120 (GESVTLPLEF…ISTKTSAKLS (86 aa)) enclose the Ig-like V-type domain. Residues Asn58, Asn87, Asn137, Asn144, Asn161, Asn178, and Asn203 are each glycosylated (N-linked (GlcNAc...) asparagine). The Ig-like C2-type domain occupies 132–209 (NIQVTNHSQL…AVSNLSFSVS (78 aa)). Disulfide bonds link Cys147/Cys214 and Cys153/Cys195. Residues 227–247 (ILFMVSGICIVFGFIILLLLV) traverse the membrane as a helical segment. Topologically, residues 248-331 (LRKRRDSLSL…FSRATALDNV (84 aa)) are cytoplasmic. Residue Tyr274 is modified to Phosphotyrosine. Phosphoserine is present on Ser278. 2 consecutive short sequence motifs (ITSM) follow at residues 283–288 (TVYASV) and 307–312 (TIYSTI). A Phosphotyrosine modification is found at Tyr309.

As to quaternary structure, homodimer. Interacts with PTN6. Interacts (phosphorylated) with PTN11. Interacts (phosphorylated on tyrosine residues) with SH2D1A/SAP and SH2D1B/EAT2; SH2D1A and SH2D1B can associate with the same SLAMF6 molecule; interaction with SH2D1B is mediated by ITSM 2. Post-translationally, phosphorylation in NK cells upon engagment by SLAMF6-expressing target cells is leading to receptor activation. Expressed by all (resting and activated) natural killer cells (NK), T- and B-lymphocytes. Increased surface expression on T-cells of systemic lupus erythematosus (SLE) patients.

The protein localises to the cell membrane. In terms of biological role, self-ligand receptor of the signaling lymphocytic activation molecule (SLAM) family. SLAM receptors triggered by homo- or heterotypic cell-cell interactions are modulating the activation and differentiation of a wide variety of immune cells and thus are involved in the regulation and interconnection of both innate and adaptive immune response. Activities are controlled by presence or absence of small cytoplasmic adapter proteins, SH2D1A/SAP and/or SH2D1B/EAT-2. Triggers cytolytic activity only in natural killer cells (NK) expressing high surface densities of natural cytotoxicity receptors. Positive signaling in NK cells implicates phosphorylation of VAV1. NK cell activation seems to depend on SH2D1B and not on SH2D1A. In conjunction with SLAMF1 controls the transition between positive selection and the subsequent expansion and differentiation of the thymocytic natural killer T (NKT) cell lineage. Promotes T-cell differentiation into a helper T-cell Th17 phenotype leading to increased IL-17 secretion; the costimulatory activity requires SH2D1A. Promotes recruitment of RORC to the IL-17 promoter. In conjunction with SLAMF1 and CD84/SLAMF5 may be a negative regulator of the humoral immune response. In the absence of SH2D1A/SAP can transmit negative signals to CD4(+) T-cells and NKT cells. Negatively regulates germinal center formation by inhibiting T-cell:B-cell adhesion; the function probably implicates increased association with PTPN6/SHP-1 via ITSMs in absence of SH2D1A/SAP. However, reported to be involved in maintaining B-cell tolerance in germinal centers and in preventing autoimmunity. The polypeptide is SLAM family member 6 (SLAMF6) (Homo sapiens (Human)).